A 399-amino-acid chain; its full sequence is Phosphoglycerate kinase (399 aa).

Substrate-binding positions include 22 to 24 (DFN), Arg38, 61 to 64 (HLGR), Arg120, and Arg153. ATP is bound by residues Lys204, Glu326, and 352–355 (GGDT).

It belongs to the phosphoglycerate kinase family. In terms of assembly, monomer.

The protein resides in the cytoplasm. The enzyme catalyses (2R)-3-phosphoglycerate + ATP = (2R)-3-phospho-glyceroyl phosphate + ADP. The protein operates within carbohydrate degradation; glycolysis; pyruvate from D-glyceraldehyde 3-phosphate: step 2/5. In Citrifermentans bemidjiense (strain ATCC BAA-1014 / DSM 16622 / JCM 12645 / Bem) (Geobacter bemidjiensis), this protein is Phosphoglycerate kinase.